The chain runs to 920 residues: 2-oxoglutarate dehydrogenase E1 component (920 aa).

Belongs to the alpha-ketoglutarate dehydrogenase family. Homodimer. Part of the 2-oxoglutarate dehydrogenase (OGDH) complex composed of E1 (2-oxoglutarate dehydrogenase), E2 (dihydrolipoamide succinyltransferase) and E3 (dihydrolipoamide dehydrogenase); the complex contains multiple copies of the three enzymatic components (E1, E2 and E3). Requires thiamine diphosphate as cofactor.

The enzyme catalyses N(6)-[(R)-lipoyl]-L-lysyl-[protein] + 2-oxoglutarate + H(+) = N(6)-[(R)-S(8)-succinyldihydrolipoyl]-L-lysyl-[protein] + CO2. In terms of biological role, E1 component of the 2-oxoglutarate dehydrogenase (OGDH) complex which catalyzes the decarboxylation of 2-oxoglutarate, the first step in the conversion of 2-oxoglutarate to succinyl-CoA and CO(2). In Leptospira interrogans serogroup Icterohaemorrhagiae serovar copenhageni (strain Fiocruz L1-130), this protein is 2-oxoglutarate dehydrogenase E1 component.